A 142-amino-acid chain; its full sequence is Gonadotropin subunit beta-2 (142 aa).

The N-terminal stretch at methionine 1–glycine 24 is a signal peptide. 6 cysteine pairs are disulfide-bonded: cysteine 30/cysteine 78, cysteine 44/cysteine 93, cysteine 47/cysteine 131, cysteine 55/cysteine 109, cysteine 59/cysteine 111, and cysteine 114/cysteine 121. A glycan (N-linked (GlcNAc...) asparagine) is linked at asparagine 34.

Belongs to the glycoprotein hormones subunit beta family. In terms of assembly, heterodimer of an alpha and a beta chain.

The protein localises to the secreted. Involved in gametogenesis and steroidogenesis. The polypeptide is Gonadotropin subunit beta-2 (cgbb) (Coregonus autumnalis (Arctic cisco)).